Here is a 463-residue protein sequence, read N- to C-terminus: FAD-dependent monooxygenase ausM (463 aa).

3 residues coordinate FAD: Glu-40, Gly-54, and Arg-113. Tyr-217 is an active-site residue. FAD is bound by residues Asp-309 and Ala-322. The helical transmembrane segment at 443 to 463 (VPWLVISLPVLASVLCYLMFA) threads the bilayer.

Belongs to the paxM FAD-dependent monooxygenase family. FAD serves as cofactor.

The protein resides in the membrane. It functions in the pathway secondary metabolite biosynthesis; terpenoid biosynthesis. Functionally, FAD-dependent monooxygenase; part of the gene cluster that mediates the biosynthesis of calidodehydroaustin, a fungal meroterpenoid. The first step of the pathway is the synthesis of 3,5-dimethylorsellinic acid by the polyketide synthase ausA. 3,5-dimethylorsellinic acid is then prenylated by the polyprenyl transferase ausN. Further epoxidation by the FAD-dependent monooxygenase ausM and cyclization by the probable terpene cyclase ausL lead to the formation of protoaustinoid A. Protoaustinoid A is then oxidized to spiro-lactone preaustinoid A3 by the combined action of the FAD-binding monooxygenases ausB and ausC, and the dioxygenase ausE. Acid-catalyzed keto-rearrangement and ring contraction of the tetraketide portion of preaustinoid A3 by ausJ lead to the formation of preaustinoid A4. The aldo-keto reductase ausK, with the help of ausH, is involved in the next step by transforming preaustinoid A4 into isoaustinone which is in turn hydroxylated by the P450 monooxygenase ausI to form austinolide. The cytochrome P450 monooxygenase ausG modifies austinolide to austinol. Austinol is further acetylated to austin by the O-acetyltransferase ausP, which spontaneously changes to dehydroaustin. The cytochrome P450 monooxygenase ausR then converts dehydroaustin is into 7-dehydrodehydroaustin. The hydroxylation catalyzed by ausR permits the O-acetyltransferase ausQ to add an additional acetyl group to the molecule, leading to the formation of acetoxydehydroaustin. The short chain dehydrogenase ausT catalyzes the reduction of the double bond present between carbon atoms 1 and 2 to convert 7-dehydrodehydroaustin into 1,2-dihydro-7-hydroxydehydroaustin. AusQ catalyzes not only an acetylation reaction but also the addition of the PKS ausV diketide product to 1,2-dihydro-7-hydroxydehydroaustin, forming precalidodehydroaustin. Finally, the iron/alpha-ketoglutarate-dependent dioxygenase converts precalidodehydroaustin into calidodehydroaustin. This chain is FAD-dependent monooxygenase ausM, found in Aspergillus calidoustus.